The following is a 211-amino-acid chain: Peptidyl-prolyl cis-trans isomerase-like 3 (211 aa).

The 204-residue stretch at Met1–Ile204 folds into the PPIase cyclophilin-type domain.

This sequence belongs to the cyclophilin-type PPIase family. PPIL3 subfamily.

It catalyses the reaction [protein]-peptidylproline (omega=180) = [protein]-peptidylproline (omega=0). Functionally, PPIases accelerate the folding of proteins. It catalyzes the cis-trans isomerization of proline imidic peptide bonds in oligopeptides. The polypeptide is Peptidyl-prolyl cis-trans isomerase-like 3 (cyp10) (Emericella nidulans (strain FGSC A4 / ATCC 38163 / CBS 112.46 / NRRL 194 / M139) (Aspergillus nidulans)).